Here is a 360-residue protein sequence, read N- to C-terminus: Aminomethyltransferase (360 aa).

The protein belongs to the GcvT family. In terms of assembly, the glycine cleavage system is composed of four proteins: P, T, L and H.

It carries out the reaction N(6)-[(R)-S(8)-aminomethyldihydrolipoyl]-L-lysyl-[protein] + (6S)-5,6,7,8-tetrahydrofolate = N(6)-[(R)-dihydrolipoyl]-L-lysyl-[protein] + (6R)-5,10-methylene-5,6,7,8-tetrahydrofolate + NH4(+). In terms of biological role, the glycine cleavage system catalyzes the degradation of glycine. The protein is Aminomethyltransferase of Bdellovibrio bacteriovorus (strain ATCC 15356 / DSM 50701 / NCIMB 9529 / HD100).